Consider the following 223-residue polypeptide: ATP synthase subunit a 1 (223 aa).

A run of 5 helical transmembrane segments spans residues 20–40 (QTIVMTWVIMVFLAGGSAFLT), 78–98 (YLSYLATLFLFVATAVLFTII), 107–127 (SLSTTAALALSVFVAVPLYGI), 173–193 (VMIIGILLGIAPLFFPVLMSV), and 194–214 (LGLLTGMVQAYIFSMLATVYI).

The protein belongs to the ATPase A chain family. F-type ATPases have 2 components, CF(1) - the catalytic core - and CF(0) - the membrane proton channel. CF(1) has five subunits: alpha(3), beta(3), gamma(1), delta(1), epsilon(1). CF(0) has four main subunits: a, b, b' and c.

It is found in the cell inner membrane. Its function is as follows. Key component of the proton channel; it plays a direct role in the translocation of protons across the membrane. The polypeptide is ATP synthase subunit a 1 (Prosthecochloris aestuarii (strain DSM 271 / SK 413)).